The primary structure comprises 374 residues: O-methyltransferase 16 (374 aa).

5 residues coordinate S-adenosyl-L-homocysteine: Ser195, Gly219, Asp242, Asp262, and Lys276. Asp242 contacts S-adenosyl-L-methionine. His280 (proton acceptor) is an active-site residue.

This sequence belongs to the class I-like SAM-binding methyltransferase superfamily. Cation-independent O-methyltransferase family. As to quaternary structure, homodimer. As to expression, expressed mainly in vasculature and cortex tissues at low levels.

The enzyme catalyses dopamine + S-adenosyl-L-methionine = 4-methoxytyramine + S-adenosyl-L-homocysteine + H(+). It participates in aromatic compound metabolism. It functions in the pathway alkaloid biosynthesis. Its function is as follows. O-methyltransferase participating in the biosynthesis of natural products derived from phenylethylamine, including mescaline, a natural hallucinogen potentially used in psychotherapeutic treatments. Catalyzes the O-methylation of dopamine to produce 4-methoxytyramine. The polypeptide is O-methyltransferase 16 (Lophophora williamsii (Peyote)).